A 193-amino-acid chain; its full sequence is Ion-translocating oxidoreductase complex subunit A (193 aa).

A run of 6 helical transmembrane segments spans residues 5–25, 39–59, 63–83, 102–122, 134–154, and 171–191; these read LLLLVSTVLINNFVLVKFLGL, VGMGLATTFVMTLASASSYLM, ILIPLNIAYLRTLAFILVIAV, LLGIFLPLITTNCAVLGVALL, IIYGFGAAAGFSLVLILFAAM, and SIAMVTAGLMSLAFMGFTGLI.

It belongs to the NqrDE/RnfAE family. In terms of assembly, the complex is composed of six subunits: RnfA, RnfB, RnfC, RnfD, RnfE and RnfG.

The protein localises to the cell inner membrane. Part of a membrane-bound complex that couples electron transfer with translocation of ions across the membrane. This is Ion-translocating oxidoreductase complex subunit A from Aeromonas salmonicida (strain A449).